A 611-amino-acid polypeptide reads, in one-letter code: Pyrichalasin H cluster regulator pyiR (611 aa).

A DNA-binding region (zn(2)-C6 fungal-type) is located at residues 11-47 (CDRCRGHKLRCIRLDPGPNDTGALLPCKRCVKAGAEC). 6 disordered regions span residues 53–128 (LSVK…LPPW), 169–192 (ALAA…DGTT), 265–291 (GGAG…GRSS), 401–427 (AHEG…AAPQ), 521–550 (RGGL…SDER), and 564–593 (SWFT…RTVE). The span at 59–69 (GDGHHSAHRAT) shows a compositional bias: basic and acidic residues. Residues 98-109 (PTQPAPQRQTQR) are compositionally biased toward low complexity. Over residues 265–279 (GGAGSQSLRDQQMQQ) the composition is skewed to polar residues. Gly residues predominate over residues 572-587 (GGSGGSGPGEGTGDSN).

The protein localises to the nucleus. In terms of biological role, transcription factor that specifically regulates the expression of the gene cluster that mediates the biosynthesis of the mycotoxin pyrichalasin H, a tyrosine-derived cytochalasan that inhibits the growth of rice seedlings, but also inhibits lymphocyte capping and actin polymerization and alters cell morphology. Pyrichalasin H is indicated as the responsible agent for the genus-specific pathogenicity of M.grisea toward crabgrass. The polypeptide is Pyrichalasin H cluster regulator pyiR (Pyricularia grisea (Crabgrass-specific blast fungus)).